Here is a 453-residue protein sequence, read N- to C-terminus: UDP-glucose 6-dehydrogenase (453 aa).

NAD(+) contacts are provided by residues 2–19 (RLCV…AACF), Val-11, Thr-121, and Glu-158. Residues 154-158 (EFLKE), Lys-210, Asn-214, 255-259 (FIYAG), and Gly-263 each bind substrate. Cys-266 functions as the Nucleophile in the catalytic mechanism. Residue Lys-269 participates in NAD(+) binding. Residue Lys-327 participates in substrate binding. Arg-334 is an NAD(+) binding site.

It belongs to the UDP-glucose/GDP-mannose dehydrogenase family.

It catalyses the reaction UDP-alpha-D-glucose + 2 NAD(+) + H2O = UDP-alpha-D-glucuronate + 2 NADH + 3 H(+). It functions in the pathway nucleotide-sugar biosynthesis; UDP-alpha-D-glucuronate biosynthesis; UDP-alpha-D-glucuronate from UDP-alpha-D-glucose: step 1/1. It participates in bacterial outer membrane biogenesis; lipopolysaccharide biosynthesis. This Pseudomonas aeruginosa (strain ATCC 15692 / DSM 22644 / CIP 104116 / JCM 14847 / LMG 12228 / 1C / PRS 101 / PAO1) protein is UDP-glucose 6-dehydrogenase (udg).